Reading from the N-terminus, the 157-residue chain is Large ribosomal subunit protein uL3 (157 aa).

Residues 57–98 form a disordered region; the sequence is GKGFAGSIKRHNQSRGPESHGSRYHRRPGSMGPIKGKLKGKK.

Belongs to the universal ribosomal protein uL3 family. As to quaternary structure, part of the 50S ribosomal subunit. Forms a cluster with proteins L14 and L19.

Functionally, one of the primary rRNA binding proteins, it binds directly near the 3'-end of the 23S rRNA, where it nucleates assembly of the 50S subunit. This Onion yellows phytoplasma (strain OY-M) protein is Large ribosomal subunit protein uL3 (rplC).